Here is a 251-residue protein sequence, read N- to C-terminus: Flagellar basal-body rod protein FlgF (251 aa).

It belongs to the flagella basal body rod proteins family. As to quaternary structure, the basal body constitutes a major portion of the flagellar organelle and consists of five rings (E,L,P,S, and M) mounted on a central rod. The rod consists of about 26 subunits of FlgG in the distal portion, and FlgB, FlgC and FlgF are thought to build up the proximal portion of the rod with about 6 subunits each.

The protein resides in the bacterial flagellum basal body. This Salmonella typhimurium (strain LT2 / SGSC1412 / ATCC 700720) protein is Flagellar basal-body rod protein FlgF (flgF).